Consider the following 389-residue polypeptide: Transaldolase (389 aa).

K136 acts as the Schiff-base intermediate with substrate in catalysis. 2 EF-hand domains span residues A330 to I365 and I365 to L388. Positions 343, 345, 347, 354, 366, 368, 370, 372, and 377 each coordinate Ca(2+).

Belongs to the transaldolase family. Type 1 subfamily.

The protein resides in the cytoplasm. The catalysed reaction is D-sedoheptulose 7-phosphate + D-glyceraldehyde 3-phosphate = D-erythrose 4-phosphate + beta-D-fructose 6-phosphate. It functions in the pathway carbohydrate degradation; pentose phosphate pathway; D-glyceraldehyde 3-phosphate and beta-D-fructose 6-phosphate from D-ribose 5-phosphate and D-xylulose 5-phosphate (non-oxidative stage): step 2/3. In terms of biological role, transaldolase is important for the balance of metabolites in the pentose-phosphate pathway. This is Transaldolase from Gloeobacter violaceus (strain ATCC 29082 / PCC 7421).